The chain runs to 249 residues: Mediator of RNA polymerase II transcription subunit 6 (249 aa).

A compositionally biased stretch (basic and acidic residues) spans 156 to 173 (SDRSKSDKKDANSAKDEN). Disordered regions lie at residues 156-177 (SDRSKSDKKDANSAKDENSGTL) and 198-249 (IPPM…KKSK). The segment covering 217–228 (TARNASEMNNAT) has biased composition (polar residues). Residues 233 to 249 (IKTEGVDMKPPPEKKSK) show a composition bias toward basic and acidic residues.

Belongs to the Mediator complex subunit 6 family. In terms of assembly, component of the Mediator complex, which includes at least MED4, MED6, MED14, MED17, MED18, MED20, MED21, MED23, MED24, MED27, MED30 and MED31.

It is found in the nucleus. Its function is as follows. Component of the Mediator complex, a coactivator involved in the regulated transcription of nearly all RNA polymerase II-dependent genes. Mediator functions as a bridge to convey information from gene-specific regulatory proteins to the basal RNA polymerase II transcription machinery. Mediator is recruited to promoters by direct interactions with regulatory proteins and serves as a scaffold for the assembly of a functional preinitiation complex with RNA polymerase II and the general transcription factors. Required for activated transcription of the MtnA, MtnB and MtnD genes. The sequence is that of Mediator of RNA polymerase II transcription subunit 6 (MED6) from Drosophila melanogaster (Fruit fly).